The following is a 138-amino-acid chain: Large ribosomal subunit protein bL17 (138 aa).

This sequence belongs to the bacterial ribosomal protein bL17 family. As to quaternary structure, part of the 50S ribosomal subunit. Contacts protein L32.

This Methylorubrum extorquens (strain PA1) (Methylobacterium extorquens) protein is Large ribosomal subunit protein bL17.